We begin with the raw amino-acid sequence, 690 residues long: Polyribonucleotide nucleotidyltransferase (690 aa).

Mg(2+)-binding residues include aspartate 482 and aspartate 488. A KH domain is found at 549–608 (PRIITIQINPDRIRDVIGPGGKVIRALTEETGATIDIQDNGTVTIASVDGEAGAAAKRRI). The S1 motif domain occupies 618 to 686 (DTIYDGKVAK…RQGKIKLSMK (69 aa)).

Belongs to the polyribonucleotide nucleotidyltransferase family. Component of the RNA degradosome, which is a multiprotein complex involved in RNA processing and mRNA degradation. Mg(2+) serves as cofactor.

The protein resides in the cytoplasm. It carries out the reaction RNA(n+1) + phosphate = RNA(n) + a ribonucleoside 5'-diphosphate. In terms of biological role, involved in mRNA degradation. Catalyzes the phosphorolysis of single-stranded polyribonucleotides processively in the 3'- to 5'-direction. In Acidithiobacillus ferrooxidans (strain ATCC 23270 / DSM 14882 / CIP 104768 / NCIMB 8455) (Ferrobacillus ferrooxidans (strain ATCC 23270)), this protein is Polyribonucleotide nucleotidyltransferase.